The chain runs to 456 residues: GTPase Der (456 aa).

2 consecutive EngA-type G domains span residues 2–167 and 176–351; these read LKVA…DQFG and ATFC…AQLK. GTP is bound by residues 8-15, 55-59, 118-121, 182-189, 229-233, and 294-297; these read GKPNVGKS, DTGGL, NKIE, DTAGI, and NKWD. Positions 352–436 constitute a KH-like domain; that stretch reads IKISTSLLND…PITLYFKSKN (85 aa).

The protein belongs to the TRAFAC class TrmE-Era-EngA-EngB-Septin-like GTPase superfamily. EngA (Der) GTPase family. Associates with the 50S ribosomal subunit.

Its function is as follows. GTPase that plays an essential role in the late steps of ribosome biogenesis. The protein is GTPase Der of Mycoplasmoides gallisepticum (strain R(low / passage 15 / clone 2)) (Mycoplasma gallisepticum).